Consider the following 298-residue polypeptide: Mitochondrial nicotinamide adenine dinucleotide transporter SLC25A51 (298 aa).

Residues 1 to 11 (MMDSEAHEKRP) show a composition bias toward basic and acidic residues. The disordered stretch occupies residues 1–21 (MMDSEAHEKRPPMLTSSNQDL). Solcar repeat units follow at residues 28–108 (VGDM…LSRL), 117–201 (PEFA…IKES), and 214–297 (NDFI…LLKI). A run of 6 helical transmembrane segments spans residues 36 to 56 (CGYC…KILF), 85 to 105 (LPPL…YEDL), 119 to 139 (FATR…LTPF), 180 to 200 (ILFR…PIKE), 216 to 236 (FICG…INVV), and 269 to 290 (LFRG…INAT).

It belongs to the mitochondrial carrier (TC 2.A.29) family.

It is found in the mitochondrion inner membrane. It catalyses the reaction NAD(+)(in) = NAD(+)(out). In terms of biological role, mitochondrial membrane carrier protein that mediates the import of NAD(+) into mitochondria. Mitochondrial NAD(+) is required for glycolysis and mitochondrial respiration. Compared to SLC25A52, SLC25A51-mediated transport is essential for the import of NAD(+) in mitochondria. The transport mechanism, uniport or antiport, its electrogenicity and substrate selectivity, remain to be elucidated. In Mus musculus (Mouse), this protein is Mitochondrial nicotinamide adenine dinucleotide transporter SLC25A51.